A 161-amino-acid chain; its full sequence is Protein yippee-like B0546.4 (161 aa).

Residues 14 to 111 (SLYGCVVCNT…IENANFEKIA (98 aa)) form the Yippee domain. Zn(2+) is bound by residues Cys-18, Cys-21, Cys-74, and Cys-77. The tract at residues 117 to 161 (PLGEDRQEAPPAPNLEMSRYPLEAEKKSRPQYRTVSVSSSSSAEC) is disordered. Over residues 151-161 (VSVSSSSSAEC) the composition is skewed to low complexity.

Belongs to the yippee family.

In Caenorhabditis elegans, this protein is Protein yippee-like B0546.4.